The sequence spans 212 residues: 2,3-bisphosphoglycerate-dependent phosphoglycerate mutase (212 aa).

Substrate contacts are provided by residues 9–16, 22–23, R61, 88–91, K99, 115–116, and 159–160; these read RHGQSEWN, TG, ERDY, RR, and GN. The active-site Tele-phosphohistidine intermediate is H10. E88 functions as the Proton donor/acceptor in the catalytic mechanism.

It belongs to the phosphoglycerate mutase family. BPG-dependent PGAM subfamily. In terms of assembly, homodimer.

It carries out the reaction (2R)-2-phosphoglycerate = (2R)-3-phosphoglycerate. It participates in carbohydrate degradation; glycolysis; pyruvate from D-glyceraldehyde 3-phosphate: step 3/5. Functionally, catalyzes the interconversion of 2-phosphoglycerate and 3-phosphoglycerate. The chain is 2,3-bisphosphoglycerate-dependent phosphoglycerate mutase from Methylobacterium radiotolerans (strain ATCC 27329 / DSM 1819 / JCM 2831 / NBRC 15690 / NCIMB 10815 / 0-1).